Here is a 393-residue protein sequence, read N- to C-terminus: Neuroplastin (393 aa).

The signal sequence occupies residues 1-28 (MSGSSLPGALALSLLLVSGSLLPGPGAA). Ig-like domains lie at 29–134 (QNAG…PSIT), 148–234 (PRIV…IEVK), and 237–327 (PDIT…ASVS). Over 29–338 (QNAGFVKSPM…VLRVRSHLAP (310 aa)) the chain is Extracellular. A disulfide bond links Cys-52 and Cys-116. The tract at residues 149-161 (RIVTSEEVIIRDS) is narpin; mediates binding with FGFR1 and has antidepressant-like activity. Residues Cys-169 and Cys-217 are joined by a disulfide bond. N-linked (GlcNAc...) asparagine glycans are attached at residues Asn-170, Asn-196, Asn-228, Asn-283, Asn-295, and Asn-316. Cys-258 and Cys-315 are joined by a disulfide. A helical transmembrane segment spans residues 339–359 (LWPFLGILAEIIILVVIIVVY). At 360–393 (EKRKRPDEVPDAGPMKTNSTNNHKDKNLRQRNTN) the chain is on the cytoplasmic side. A disordered region spans residues 366-393 (DEVPDAGPMKTNSTNNHKDKNLRQRNTN).

As to quaternary structure, interacts with ATP2B1; this interaction stabilizes ATP2B1 and increases ATPase activity; this interaction controls T cell calcium homeostasis following T cell activation. Interacts with XKR8; promoting its localization at the cell membrane. Isoform 1 and isoform 2 are N-glycosylated. In terms of tissue distribution, isoform 1 is ubiquitously expressed. Isoform 2 is brain-specific. In brain isoform 2 is highly expressed in hippocampus and cerebral cortex and weakly in cerebellum and lower brain regions. In the hippocampus isoform 2 is found in the dentate gyrus and CA1-CA4, the striatum oriens of CA3 shows the higher level.

It localises to the cell membrane. It is found in the postsynaptic density. Probable homophilic and heterophilic cell adhesion molecule involved in long term potentiation at hippocampal excitatory synapses through activation of p38MAPK. May also regulate neurite outgrowth by activating the FGFR1 signaling pathway. May play a role in synaptic plasticity. Also acts as a chaperone for ATP2B1; stabilizes ATP2B1 and increases its ATPase activity. Promotes localization of XKR8 at the cell membrane. The protein is Neuroplastin (Nptn) of Rattus norvegicus (Rat).